We begin with the raw amino-acid sequence, 1016 residues long: C2 domain-containing protein 5 (1016 aa).

Positions 1-109 constitute a C2 domain; it reads MPGKLKVKIV…EAATVISGWF (109 aa). Positions 19, 26, 76, 78, 81, and 84 each coordinate Ca(2+). Phosphoserine; by PKB/AKT2 is present on Ser197. Phosphoserine occurs at positions 200 and 260. The interval 265-330 is disordered; that stretch reads LKEIPFNEDP…SGSAGKEGGP (66 aa). A compositionally biased stretch (polar residues) spans 274–289; sequence PNPNTHSSGPSTPLKN. The span at 290–318 shows a compositional bias: low complexity; sequence QTYSFSPSKSYSRQSSSSDTDLSLTPKTG. Phosphoserine is present on residues Ser293, Ser295, Ser304, Ser305, and Ser306. Position 317 is a phosphothreonine (Thr317). Residues 319-328 show a composition bias toward gly residues; the sequence is MGSGSAGKEG. Residue Ser323 is modified to Phosphoserine. Thr601 is subject to Phosphothreonine. Residues 636 to 668 form a disordered region; that stretch reads VSEEMIGSPIPEPRQRSRLLRSQSESSDEVTEL. Phosphoserine occurs at positions 643, 657, 659, 661, and 662. At Thr666 the chain carries Phosphothreonine. Phosphoserine is present on residues Ser671, Ser817, and Ser869.

Requires Ca(2+) as cofactor. Post-translationally, phosphorylated on Ser-197 by active myristoylated kinase AKT2; insulin-stimulated phosphorylation by AKT2 regulates SLC2A4/GLUT4 translocation into the plasma membrane. As to expression, expressed in liver, muscle and fat.

The protein resides in the cytoplasmic vesicle membrane. It is found in the cytoplasm. Its subcellular location is the cell cortex. The protein localises to the cell membrane. It localises to the cell projection. The protein resides in the ruffle. In terms of biological role, required for insulin-stimulated glucose transport and glucose transporter SLC2A4/GLUT4 translocation from intracellular glucose storage vesicle (GSV) to the plasma membrane (PM) in adipocytes. Binds phospholipid membranes in a calcium-dependent manner and is necessary for the optimal membrane fusion between SLC2A4/GLUT4 GSV and the PM. This Mus musculus (Mouse) protein is C2 domain-containing protein 5 (C2cd5).